Here is a 229-residue protein sequence, read N- to C-terminus: Enolase-phosphatase E1 (229 aa).

Mg(2+) contacts are provided by aspartate 7 and glutamate 9. Residues 122–123 and lysine 161 contribute to the substrate site; that span reads SS. Aspartate 186 is a Mg(2+) binding site.

This sequence belongs to the HAD-like hydrolase superfamily. MasA/MtnC family. In terms of assembly, monomer. The cofactor is Mg(2+).

The protein localises to the cytoplasm. It localises to the nucleus. The catalysed reaction is 5-methylsulfanyl-2,3-dioxopentyl phosphate + H2O = 1,2-dihydroxy-5-(methylsulfanyl)pent-1-en-3-one + phosphate. It participates in amino-acid biosynthesis; L-methionine biosynthesis via salvage pathway; L-methionine from S-methyl-5-thio-alpha-D-ribose 1-phosphate: step 3/6. It functions in the pathway amino-acid biosynthesis; L-methionine biosynthesis via salvage pathway; L-methionine from S-methyl-5-thio-alpha-D-ribose 1-phosphate: step 4/6. Functionally, bifunctional enzyme that catalyzes the enolization of 2,3-diketo-5-methylthiopentyl-1-phosphate (DK-MTP-1-P) into the intermediate 2-hydroxy-3-keto-5-methylthiopentenyl-1-phosphate (HK-MTPenyl-1-P), which is then dephosphorylated to form the acireductone 1,2-dihydroxy-3-keto-5-methylthiopentene (DHK-MTPene). The polypeptide is Enolase-phosphatase E1 (Clavispora lusitaniae (strain ATCC 42720) (Yeast)).